Consider the following 367-residue polypeptide: 2-aminoethylphosphonate--pyruvate transaminase (367 aa).

Residue lysine 193 is modified to N6-(pyridoxal phosphate)lysine.

The protein belongs to the class-V pyridoxal-phosphate-dependent aminotransferase family. PhnW subfamily. As to quaternary structure, homodimer. Requires pyridoxal 5'-phosphate as cofactor.

It carries out the reaction (2-aminoethyl)phosphonate + pyruvate = phosphonoacetaldehyde + L-alanine. In terms of biological role, involved in phosphonate degradation. The chain is 2-aminoethylphosphonate--pyruvate transaminase from Vibrio parahaemolyticus serotype O3:K6 (strain RIMD 2210633).